A 240-amino-acid polypeptide reads, in one-letter code: Large ribosomal subunit protein uL2 (240 aa).

A compositionally biased stretch (polar residues) spans 1–11; the sequence is MGKRLISQNRG. 2 disordered regions span residues 1–28 and 206–240; these read MGKR…KGAV and GGGR…TGRK. Basic residues-rich tracts occupy residues 13–28 and 224–240; these read GTPK…KGAV and SPGR…TGRK.

The protein belongs to the universal ribosomal protein uL2 family. As to quaternary structure, part of the 50S ribosomal subunit. Forms a bridge to the 30S subunit in the 70S ribosome.

Its function is as follows. One of the primary rRNA binding proteins. Required for association of the 30S and 50S subunits to form the 70S ribosome, for tRNA binding and peptide bond formation. It has been suggested to have peptidyltransferase activity; this is somewhat controversial. Makes several contacts with the 16S rRNA in the 70S ribosome. This chain is Large ribosomal subunit protein uL2, found in Methanococcus maripaludis (strain C7 / ATCC BAA-1331).